The chain runs to 567 residues: Dihydroxy-acid dehydratase (567 aa).

C57 provides a ligand contact to [2Fe-2S] cluster. D89 serves as a coordination point for Mg(2+). C130 provides a ligand contact to [2Fe-2S] cluster. Mg(2+) contacts are provided by D131 and K132. An N6-carboxylysine modification is found at K132. C202 serves as a coordination point for [2Fe-2S] cluster. E453 serves as a coordination point for Mg(2+). The active-site Proton acceptor is S479.

It belongs to the IlvD/Edd family. As to quaternary structure, homodimer. It depends on [2Fe-2S] cluster as a cofactor. Mg(2+) serves as cofactor.

It carries out the reaction (2R)-2,3-dihydroxy-3-methylbutanoate = 3-methyl-2-oxobutanoate + H2O. It catalyses the reaction (2R,3R)-2,3-dihydroxy-3-methylpentanoate = (S)-3-methyl-2-oxopentanoate + H2O. Its pathway is amino-acid biosynthesis; L-isoleucine biosynthesis; L-isoleucine from 2-oxobutanoate: step 3/4. It functions in the pathway amino-acid biosynthesis; L-valine biosynthesis; L-valine from pyruvate: step 3/4. Its function is as follows. Functions in the biosynthesis of branched-chain amino acids. Catalyzes the dehydration of (2R,3R)-2,3-dihydroxy-3-methylpentanoate (2,3-dihydroxy-3-methylvalerate) into 2-oxo-3-methylpentanoate (2-oxo-3-methylvalerate) and of (2R)-2,3-dihydroxy-3-methylbutanoate (2,3-dihydroxyisovalerate) into 2-oxo-3-methylbutanoate (2-oxoisovalerate), the penultimate precursor to L-isoleucine and L-valine, respectively. This Nocardioides sp. (strain ATCC BAA-499 / JS614) protein is Dihydroxy-acid dehydratase.